Reading from the N-terminus, the 69-residue chain is MIFKVFYQETLKETPVREKTQSLYVEAESEVKVRQLLKDEPFHIEFVEKISDAHLAYEKENPDFALWEK.

This sequence belongs to the RNA polymerase subunit epsilon family. As to quaternary structure, RNAP is composed of a core of 2 alpha, a beta and a beta' subunit. The core is associated with a delta subunit, and at least one of epsilon or omega. When a sigma factor is associated with the core the holoenzyme is formed, which can initiate transcription.

It catalyses the reaction RNA(n) + a ribonucleoside 5'-triphosphate = RNA(n+1) + diphosphate. Its function is as follows. A non-essential component of RNA polymerase (RNAP). The chain is DNA-directed RNA polymerase subunit epsilon from Listeria welshimeri serovar 6b (strain ATCC 35897 / DSM 20650 / CCUG 15529 / CIP 8149 / NCTC 11857 / SLCC 5334 / V8).